Consider the following 362-residue polypeptide: Heat-inducible transcription repressor HrcA (362 aa).

Belongs to the HrcA family.

Its function is as follows. Negative regulator of class I heat shock genes (grpE-dnaK-dnaJ and groELS operons). Prevents heat-shock induction of these operons. This chain is Heat-inducible transcription repressor HrcA, found in Rhizobium rhizogenes (strain K84 / ATCC BAA-868) (Agrobacterium radiobacter).